The primary structure comprises 176 residues: Translation initiation factor IF-3 (176 aa).

It belongs to the IF-3 family. In terms of assembly, monomer.

Its subcellular location is the cytoplasm. IF-3 binds to the 30S ribosomal subunit and shifts the equilibrium between 70S ribosomes and their 50S and 30S subunits in favor of the free subunits, thus enhancing the availability of 30S subunits on which protein synthesis initiation begins. This Rippkaea orientalis (strain PCC 8801 / RF-1) (Cyanothece sp. (strain PCC 8801)) protein is Translation initiation factor IF-3.